A 147-amino-acid polypeptide reads, in one-letter code: Hemoglobin subunit beta (147 aa).

A Globin domain is found at Glu3–His147. Heme b-binding residues include His64 and His93.

This sequence belongs to the globin family. Heterotetramer of two alpha chains and two beta chains. Red blood cells.

Involved in oxygen transport from gills to the various peripheral tissues. The polypeptide is Hemoglobin subunit beta (Trematomus newnesi (Dusky notothen)).